A 431-amino-acid chain; its full sequence is MKQTVSHAKRLRGAISVPGDKSISHRSVLFNALAEGNAEITGFLPGADCLSSIACLRQMGVEIEHSDDKVRVFGRGLRGLREPSDVLDCGNSGTTLRLLAGLLAGQPFLSVLTGDASLRSRPQKRIVEPLRQLGAKLDGRDNGNRAPLVIRGTTIHGGNYELPIASAQVKSALLLAGLTGDAPMRLSGKIVSRDHTERMLIAMGIDLTVKDDEIVLYPPSHPVFPYPLSLHVPGDPSSATFWWVAAAIHPDAEITTLGVGLNPSRTGALDVLKAMGADITISNERNEGAEPVGDVTVRGGGLRGTRIDGDLIPRLIDEIPVLAVAAACAVGETVVADAEELRAKETDRVATVVSELTAMGATLEATPDGMIIAGGGELQGAHVQSHGDHRIAMALAVAGLVAEGETIIDEAEAVTVSYPTFWQHYAQIKEA.

Residues lysine 21, serine 22, and arginine 26 each contribute to the 3-phosphoshikimate site. Lysine 21 contributes to the phosphoenolpyruvate binding site. Positions 93 and 121 each coordinate phosphoenolpyruvate. 3-phosphoshikimate is bound by residues serine 166, glutamine 168, serine 192, aspartate 317, and lysine 344. Glutamine 168 provides a ligand contact to phosphoenolpyruvate. Residue aspartate 317 is the Proton acceptor of the active site. Arginine 348 and arginine 390 together coordinate phosphoenolpyruvate.

It belongs to the EPSP synthase family. As to quaternary structure, monomer.

It is found in the cytoplasm. It catalyses the reaction 3-phosphoshikimate + phosphoenolpyruvate = 5-O-(1-carboxyvinyl)-3-phosphoshikimate + phosphate. It functions in the pathway metabolic intermediate biosynthesis; chorismate biosynthesis; chorismate from D-erythrose 4-phosphate and phosphoenolpyruvate: step 6/7. In terms of biological role, catalyzes the transfer of the enolpyruvyl moiety of phosphoenolpyruvate (PEP) to the 5-hydroxyl of shikimate-3-phosphate (S3P) to produce enolpyruvyl shikimate-3-phosphate and inorganic phosphate. In Herpetosiphon aurantiacus (strain ATCC 23779 / DSM 785 / 114-95), this protein is 3-phosphoshikimate 1-carboxyvinyltransferase.